The primary structure comprises 588 residues: Lysine--tRNA ligase (588 aa).

Residues 1–10 (MDSSVSTEPL) are compositionally biased toward polar residues. The tract at residues 1-54 (MDSSVSTEPLSKNALKREKKAKEKEQLEQEKKAAAVAKRQMEQHNLPENDDLDP) is disordered. The span at 20-47 (KAKEKEQLEQEKKAAAVAKRQMEQHNLP) shows a compositional bias: basic and acidic residues.

This sequence belongs to the class-II aminoacyl-tRNA synthetase family.

It is found in the cytoplasm. The enzyme catalyses tRNA(Lys) + L-lysine + ATP = L-lysyl-tRNA(Lys) + AMP + diphosphate. The polypeptide is Lysine--tRNA ligase (LYSRS) (Solanum lycopersicum (Tomato)).